The sequence spans 306 residues: Homoserine kinase (306 aa).

84-94 (PAGLGLGSSGA) contacts ATP.

This sequence belongs to the GHMP kinase family. Homoserine kinase subfamily.

Its subcellular location is the cytoplasm. It carries out the reaction L-homoserine + ATP = O-phospho-L-homoserine + ADP + H(+). It functions in the pathway amino-acid biosynthesis; L-threonine biosynthesis; L-threonine from L-aspartate: step 4/5. Functionally, catalyzes the ATP-dependent phosphorylation of L-homoserine to L-homoserine phosphate. This is Homoserine kinase from Sulfolobus acidocaldarius (strain ATCC 33909 / DSM 639 / JCM 8929 / NBRC 15157 / NCIMB 11770).